A 172-amino-acid polypeptide reads, in one-letter code: Large ribosomal subunit protein uL10 (172 aa).

This sequence belongs to the universal ribosomal protein uL10 family. In terms of assembly, part of the ribosomal stalk of the 50S ribosomal subunit. The N-terminus interacts with L11 and the large rRNA to form the base of the stalk. The C-terminus forms an elongated spine to which L12 dimers bind in a sequential fashion forming a multimeric L10(L12)X complex.

Its function is as follows. Forms part of the ribosomal stalk, playing a central role in the interaction of the ribosome with GTP-bound translation factors. The polypeptide is Large ribosomal subunit protein uL10 (Mesorhizobium japonicum (strain LMG 29417 / CECT 9101 / MAFF 303099) (Mesorhizobium loti (strain MAFF 303099))).